A 429-amino-acid polypeptide reads, in one-letter code: Tubby-like F-box protein 5 (429 aa).

The F-box domain occupies 53–108 (TRWANLPAALLRDVMKKLDESESTWPARKQVVACAGVCKTWRLMCKDIVKSPEFSG). The tract at residues 360–385 (QPGSGSDGGALATRPSLSPQQPEQSN) is disordered. The segment covering 374 to 383 (PSLSPQQPEQ) has biased composition (polar residues).

The protein belongs to the TUB family. In terms of tissue distribution, mostly expressed in roots, flowers and siliques.

The chain is Tubby-like F-box protein 5 from Arabidopsis thaliana (Mouse-ear cress).